The following is a 184-amino-acid chain: ATP synthase subunit b, chloroplastic (184 aa).

The helical transmembrane segment at 27 to 49 (LATNPINLSVVLGVLIFFGKGVL) threads the bilayer.

This sequence belongs to the ATPase B chain family. F-type ATPases have 2 components, F(1) - the catalytic core - and F(0) - the membrane proton channel. F(1) has five subunits: alpha(3), beta(3), gamma(1), delta(1), epsilon(1). F(0) has four main subunits: a(1), b(1), b'(1) and c(10-14). The alpha and beta chains form an alternating ring which encloses part of the gamma chain. F(1) is attached to F(0) by a central stalk formed by the gamma and epsilon chains, while a peripheral stalk is formed by the delta, b and b' chains.

The protein localises to the plastid. The protein resides in the chloroplast thylakoid membrane. F(1)F(0) ATP synthase produces ATP from ADP in the presence of a proton or sodium gradient. F-type ATPases consist of two structural domains, F(1) containing the extramembraneous catalytic core and F(0) containing the membrane proton channel, linked together by a central stalk and a peripheral stalk. During catalysis, ATP synthesis in the catalytic domain of F(1) is coupled via a rotary mechanism of the central stalk subunits to proton translocation. Its function is as follows. Component of the F(0) channel, it forms part of the peripheral stalk, linking F(1) to F(0). The polypeptide is ATP synthase subunit b, chloroplastic (Carica papaya (Papaya)).